Consider the following 209-residue polypeptide: NAD(P)H-quinone oxidoreductase subunit K 2 (209 aa).

Residues Cys53, Cys54, Cys118, and Cys149 each contribute to the [4Fe-4S] cluster site.

It belongs to the complex I 20 kDa subunit family. NDH-1 can be composed of about 15 different subunits; different subcomplexes with different compositions have been identified which probably have different functions. It depends on [4Fe-4S] cluster as a cofactor.

The protein resides in the cellular thylakoid membrane. The catalysed reaction is a plastoquinone + NADH + (n+1) H(+)(in) = a plastoquinol + NAD(+) + n H(+)(out). The enzyme catalyses a plastoquinone + NADPH + (n+1) H(+)(in) = a plastoquinol + NADP(+) + n H(+)(out). Its function is as follows. NDH-1 shuttles electrons from an unknown electron donor, via FMN and iron-sulfur (Fe-S) centers, to quinones in the respiratory and/or the photosynthetic chain. The immediate electron acceptor for the enzyme in this species is believed to be plastoquinone. Couples the redox reaction to proton translocation, and thus conserves the redox energy in a proton gradient. Cyanobacterial NDH-1 also plays a role in inorganic carbon-concentration. The chain is NAD(P)H-quinone oxidoreductase subunit K 2 from Acaryochloris marina (strain MBIC 11017).